A 371-amino-acid polypeptide reads, in one-letter code: tRNA-specific 2-thiouridylase MnmA (371 aa).

ATP contacts are provided by residues 13–20 (GMSGGVDS) and M39. The interval 99 to 101 (NPD) is interaction with target base in tRNA. The active-site Nucleophile is C104. C104 and C200 are oxidised to a cystine. G128 contacts ATP. The segment at 150–152 (KDQ) is interaction with tRNA. C200 functions as the Cysteine persulfide intermediate in the catalytic mechanism. The segment at 308-309 (RY) is interaction with tRNA.

Belongs to the MnmA/TRMU family.

It is found in the cytoplasm. It carries out the reaction S-sulfanyl-L-cysteinyl-[protein] + uridine(34) in tRNA + AH2 + ATP = 2-thiouridine(34) in tRNA + L-cysteinyl-[protein] + A + AMP + diphosphate + H(+). Its function is as follows. Catalyzes the 2-thiolation of uridine at the wobble position (U34) of tRNA, leading to the formation of s(2)U34. The protein is tRNA-specific 2-thiouridylase MnmA of Listeria monocytogenes serovar 1/2a (strain ATCC BAA-679 / EGD-e).